A 429-amino-acid polypeptide reads, in one-letter code: 3-phosphoshikimate 1-carboxyvinyltransferase (429 aa).

Positions 22, 23, and 27 each coordinate 3-phosphoshikimate. Lysine 22 is a phosphoenolpyruvate binding site. 2 residues coordinate phosphoenolpyruvate: glycine 94 and arginine 122. 3-phosphoshikimate contacts are provided by serine 167, glutamine 169, aspartate 315, and lysine 342. Glutamine 169 is a phosphoenolpyruvate binding site. Catalysis depends on aspartate 315, which acts as the Proton acceptor. 2 residues coordinate phosphoenolpyruvate: arginine 346 and arginine 388.

It belongs to the EPSP synthase family. As to quaternary structure, monomer.

The protein resides in the cytoplasm. It catalyses the reaction 3-phosphoshikimate + phosphoenolpyruvate = 5-O-(1-carboxyvinyl)-3-phosphoshikimate + phosphate. The protein operates within metabolic intermediate biosynthesis; chorismate biosynthesis; chorismate from D-erythrose 4-phosphate and phosphoenolpyruvate: step 6/7. In terms of biological role, catalyzes the transfer of the enolpyruvyl moiety of phosphoenolpyruvate (PEP) to the 5-hydroxyl of shikimate-3-phosphate (S3P) to produce enolpyruvyl shikimate-3-phosphate and inorganic phosphate. The protein is 3-phosphoshikimate 1-carboxyvinyltransferase of Geobacter sulfurreducens (strain ATCC 51573 / DSM 12127 / PCA).